The following is a 256-amino-acid chain: Phosphonates import ATP-binding protein PhnC (256 aa).

Positions 3 to 247 (LELKNISKTY…VLHKEIFTNV (245 aa)) constitute an ABC transporter domain. An ATP-binding site is contributed by 36 to 43 (GLSGAGKS).

The protein belongs to the ABC transporter superfamily. Phosphonates importer (TC 3.A.1.9.1) family. The complex is composed of two ATP-binding proteins (PhnC), two transmembrane proteins (PhnE) and a solute-binding protein (PhnD).

The protein resides in the cell inner membrane. It catalyses the reaction phosphonate(out) + ATP + H2O = phosphonate(in) + ADP + phosphate + H(+). Functionally, part of the ABC transporter complex PhnCDE involved in phosphonates import. Responsible for energy coupling to the transport system. The protein is Phosphonates import ATP-binding protein PhnC of Treponema denticola (strain ATCC 35405 / DSM 14222 / CIP 103919 / JCM 8153 / KCTC 15104).